An 83-amino-acid chain; its full sequence is Small ribosomal subunit protein eS21 (83 aa).

This sequence belongs to the eukaryotic ribosomal protein eS21 family. In terms of assembly, component of the 40S small ribosomal subunit. Interacts with sta.

It is found in the cytoplasm. The protein localises to the cytosol. The protein resides in the rough endoplasmic reticulum. This chain is Small ribosomal subunit protein eS21 (RpS21), found in Ceratitis capitata (Mediterranean fruit fly).